A 157-amino-acid chain; its full sequence is Ribonuclease H (157 aa).

Residues 4–146 form the RNase H type-1 domain; the sequence is KRTEITIYTD…CDKLAVKASQ (143 aa). Mg(2+)-binding residues include Asp13, Glu51, Asp73, and Asp138.

The protein belongs to the RNase H family. As to quaternary structure, monomer. It depends on Mg(2+) as a cofactor.

It is found in the cytoplasm. The catalysed reaction is Endonucleolytic cleavage to 5'-phosphomonoester.. Functionally, endonuclease that specifically degrades the RNA of RNA-DNA hybrids. This chain is Ribonuclease H, found in Trichodesmium erythraeum (strain IMS101).